Reading from the N-terminus, the 369-residue chain is Putative F-box/kelch-repeat protein At4g39760 (369 aa).

Residues 14 to 60 enclose the F-box domain; the sequence is SLSFSSLPHEIVVSCLARVSGSYYPKLCLVSKQFRSIILSNEIYKAR. Kelch repeat units follow at residues 131–177, 178–224, and 228–274; these read ETYI…GQYP, NIYV…KMKM, and NVYV…KNCW.

The chain is Putative F-box/kelch-repeat protein At4g39760 from Arabidopsis thaliana (Mouse-ear cress).